A 460-amino-acid chain; its full sequence is Probable lipase C14C8.15 (460 aa).

The Cytoplasmic segment spans residues 1-16 (MTLNGNIMKYCLEKGE). A helical; Signal-anchor for type II membrane protein transmembrane segment spans residues 17-37 (ILISFLLIALESMFRICTVIL). The Lumenal segment spans residues 38–460 (PSPLRNWFYE…LVDGVMNHTI (423 aa)). Serine 214 serves as the catalytic Nucleophile. An N-linked (GlcNAc...) asparagine glycan is attached at asparagine 308. Residues aspartate 382 and histidine 408 each act as charge relay system in the active site. Asparagine 457 carries N-linked (GlcNAc...) asparagine glycosylation.

Belongs to the AB hydrolase superfamily. Lipase family.

Its subcellular location is the golgi apparatus. The protein resides in the membrane. Its function is as follows. Probable lipase. In Schizosaccharomyces pombe (strain 972 / ATCC 24843) (Fission yeast), this protein is Probable lipase C14C8.15.